The following is a 786-amino-acid chain: Digalactosyldiacylglycerol synthase 1, chloroplastic (786 aa).

The N-terminal 25 residues, 1 to 25 (MASQRQPPSSSNAFSFLSKGWREVR), are a transit peptide targeting the chloroplast.

This sequence belongs to the glycosyltransferase group 1 family. Glycosyltransferase 4 subfamily. As to expression, high expression in nodules infected cells, but low in nodule inner cortex and root central cylinder.

The protein localises to the plastid. Its subcellular location is the chloroplast outer membrane. It is found in the plastid outer membrane. It carries out the reaction a 1,2-diacyl-3-O-(beta-D-galactosyl)-sn-glycerol + UDP-alpha-D-galactose = a 1,2-diacyl-3-O-[alpha-D-galactosyl-(1-&gt;6)-beta-D-galactosyl]-sn-glycerol + UDP + H(+). Involved in the synthesis of diacylglycerol galactolipids that are specifically found in thylakoid and in nodule peribacteroid membranes. Specific for alpha-glycosidic linkages. This chain is Digalactosyldiacylglycerol synthase 1, chloroplastic, found in Lotus japonicus (Lotus corniculatus var. japonicus).